We begin with the raw amino-acid sequence, 74 residues long: Serine protease inhibitor Kazal-type 7 (74 aa).

Positions 1–17 (MKLLGGLLLLFTATCLC) are cleaved as a signal peptide. The Kazal-like domain occupies 18–74 (NVDCDIYKKYPVVAIPCPIENIPVCGSDYITYGNKCKLCTEILRSNGKIQFLHEGHC). Intrachain disulfides connect Cys21–Cys56, Cys34–Cys53, and Cys42–Cys74.

Its subcellular location is the secreted. Functionally, probable serine protease inhibitor. This chain is Serine protease inhibitor Kazal-type 7 (Spink7), found in Rattus norvegicus (Rat).